The following is a 143-amino-acid chain: Hemoglobin subunit alpha (143 aa).

Position 2 is an N-acetylserine (S2). The Globin domain maps to 2–143 (SLSDKDKAAV…LALALSEKYR (142 aa)). H60 contributes to the O2 binding site. Residue H89 coordinates heme b.

The protein belongs to the globin family. In terms of assembly, heterotetramer of two alpha chains and two beta chains. Red blood cells.

Functionally, involved in oxygen transport from gills to the various peripheral tissues. In Cyprinus carpio (Common carp), this protein is Hemoglobin subunit alpha (hba).